An 863-amino-acid chain; its full sequence is DNA replication licensing factor mcm4-B (863 aa).

A disordered region spans residues 1-130; that stretch reads MSSPTSTPSR…ARKVKQVDLH (130 aa). Polar residues-rich tracts occupy residues 54–64 and 84–99; these read SPSGDVQSPSG and LDLSSPLTYGTPSSRV. The C4-type zinc finger occupies 306–331; sequence CQVCAFTTRVEIDRGRIAEPSVCKHC. The region spanning 458-667 is the MCM domain; it reads IYERLAAALA…YDRRLAHHLV (210 aa). ATP-binding residues include tyrosine 471, arginine 497, lysine 516, serine 517, asparagine 618, arginine 643, arginine 732, and glutamate 735. The Arginine finger motif lies at 642–645; the sequence is SRFD.

Belongs to the MCM family. Component of the mcm2-7 complex (RLF-M). The complex forms a toroidal hexameric ring with the proposed subunit order mcm2-mcm6-mcm4-mcm7-mcm3-mcm5. The heterodimer of mmcm3/mcm5 interacts with mcm4, mmcm6, mcm7 and weakly with mcm2. Begins to associate with zmcm6 at the neurula stage. Component of the CMG helicase complex, composed of the mcm2-7 complex, the GINS complex and cdc45. Hyperphosphorylated during mitosis in a mechanism requiring cdc2-cyclin B and other kinases. Undergoes dephosphorylation after exiting mitosis, existing in a partially phosphorylated state in the cytosolic interphase mcm complex which associates with the pre-replication complexes (pre-Rcs). Complete dephosphorylation inactivates the mcm complex, preventing its binding to chromatin. Becomes actively phosphorylated during S phase once the mcm complex is assembled on the chromatin. This chromatin-associated phosphorylation occurs during the activation of the pre-Rcs and is independent of cdks. Phosphorylated by the cdc7-dbf4b complex.

The protein resides in the nucleus. The protein localises to the chromosome. It carries out the reaction ATP + H2O = ADP + phosphate + H(+). Functionally, acts as a component of the MCM2-7 complex (MCM complex) which is the replicative helicase essential for 'once per cell cycle' DNA replication initiation and elongation in eukaryotic cells. Core component of CDC45-MCM-GINS (CMG) helicase, the molecular machine that unwinds template DNA during replication, and around which the replisome is built. The active ATPase sites in the MCM2-7 ring are formed through the interaction surfaces of two neighboring subunits such that a critical structure of a conserved arginine finger motif is provided in trans relative to the ATP-binding site of the Walker A box of the adjacent subunit. The six ATPase active sites, however, are likely to contribute differentially to the complex helicase activity. This chain is DNA replication licensing factor mcm4-B (mcm4-b), found in Xenopus laevis (African clawed frog).